A 236-amino-acid polypeptide reads, in one-letter code: Probable calcium-binding protein CML30 (236 aa).

Positions Val-43–Leu-64 are disordered. The segment covering Lys-49 to Pro-60 has biased composition (basic and acidic residues). EF-hand domains lie at Asp-59–Ala-94 and Ser-96–Arg-131. 8 residues coordinate Ca(2+): Asp-72, Asp-74, Asp-76, Glu-83, Asp-109, Asn-111, Asp-113, and Glu-120. Residues Lys-130–Glu-158 are disordered. Positions Ala-146–Glu-158 are enriched in acidic residues. EF-hand domains are found at residues Glu-161–Arg-196 and Pro-202–Ala-236. Positions 174, 176, 178, 185, 215, 217, 219, 221, and 226 each coordinate Ca(2+).

In terms of biological role, potential calcium sensor. The polypeptide is Probable calcium-binding protein CML30 (CML30) (Oryza sativa subsp. japonica (Rice)).